The sequence spans 513 residues: Probable DNA ligase (513 aa).

Residue Glu213 participates in ATP binding. Lys215 (N6-AMP-lysine intermediate) is an active-site residue. ATP-binding residues include Arg220, Arg235, Glu264, Phe304, Arg376, and Lys382.

The protein belongs to the ATP-dependent DNA ligase family. It depends on Mg(2+) as a cofactor.

The enzyme catalyses ATP + (deoxyribonucleotide)n-3'-hydroxyl + 5'-phospho-(deoxyribonucleotide)m = (deoxyribonucleotide)n+m + AMP + diphosphate.. DNA ligase that seals nicks in double-stranded DNA during DNA replication, DNA recombination and DNA repair. This is Probable DNA ligase from Anaeromyxobacter dehalogenans (strain 2CP-1 / ATCC BAA-258).